The sequence spans 609 residues: UvrABC system protein C (609 aa).

A GIY-YIG domain is found at His-16 to Ile-94. A UVR domain is found at Arg-203–Val-238.

Belongs to the UvrC family. Interacts with UvrB in an incision complex.

The protein resides in the cytoplasm. Its function is as follows. The UvrABC repair system catalyzes the recognition and processing of DNA lesions. UvrC both incises the 5' and 3' sides of the lesion. The N-terminal half is responsible for the 3' incision and the C-terminal half is responsible for the 5' incision. The chain is UvrABC system protein C from Bordetella bronchiseptica (strain ATCC BAA-588 / NCTC 13252 / RB50) (Alcaligenes bronchisepticus).